Here is a 260-residue protein sequence, read N- to C-terminus: UPF0294 protein YPO1077/y3099/YP_2772 (260 aa).

The protein belongs to the UPF0294 family.

The protein resides in the cytoplasm. This Yersinia pestis protein is UPF0294 protein YPO1077/y3099/YP_2772.